The sequence spans 502 residues: L-ornithine N(5)-monooxygenase (502 aa).

Positions 1–10 are enriched in basic and acidic residues; it reads MEPVERKLEI. The interval 1–34 is disordered; it reads MEPVERKLEIGSRSYSKMPLTQQRSSGEPPRLKA. The span at 13–26 shows a compositional bias: polar residues; the sequence is RSYSKMPLTQQRSS. Residues 83-91 and glutamine 102 contribute to the FAD site; that span reads ERQKQFAWH. Substrate is bound at residue lysine 107. Valine 168 is an FAD binding site. Residues 254 to 257 and arginine 279 contribute to the NADP(+) site; that span reads SGQS. Residues 293–296 and asparagine 323 each bind substrate; that span reads NEVF. An NADP(+)-binding site is contributed by 323 to 325; the sequence is NYS. Position 466–468 (466–468) interacts with FAD; that stretch reads SLL. Serine 469 provides a ligand contact to substrate.

This sequence belongs to the lysine N(6)-hydroxylase/L-ornithine N(5)-oxygenase family. As to quaternary structure, homotetramer. FAD is required as a cofactor.

The catalysed reaction is L-ornithine + NADPH + O2 = N(5)-hydroxy-L-ornithine + NADP(+) + H2O. It catalyses the reaction L-ornithine + NADH + O2 = N(5)-hydroxy-L-ornithine + NAD(+) + H2O. It functions in the pathway siderophore biosynthesis. Functionally, catalyzes the conversion of L-ornithine to N(5)-hydroxyornithine, the first step in the biosynthesis of all hydroxamate-containing siderophores, such as deferriferrichrysin. This is L-ornithine N(5)-monooxygenase from Aspergillus oryzae (strain ATCC 42149 / RIB 40) (Yellow koji mold).